Consider the following 419-residue polypeptide: Hyaluronan synthase (419 aa).

The next 5 membrane-spanning stretches (helical) occupy residues 8–28, 33–53, 318–338, 345–365, and 376–396; these read LIVL…MYLF, VGIY…LSFL, IVAL…VAIG, AIQL…IVAL, and PASF…LQPL.

This sequence belongs to the NodC/HAS family. Requires Mg(2+) as cofactor.

Its subcellular location is the cell membrane. It carries out the reaction [hyaluronan](n) + UDP-N-acetyl-alpha-D-glucosamine = N-acetyl-beta-D-glucosaminyl-(1-&gt;4)-[hyaluronan](n) + UDP + H(+). The catalysed reaction is N-acetyl-beta-D-glucosaminyl-(1-&gt;4)-[hyaluronan](n) + UDP-alpha-D-glucuronate = [hyaluronan](n+1) + UDP + H(+). The protein operates within glycan biosynthesis; hyaluronan biosynthesis. Functionally, glycosaminoglycan synthesis. The hyaluronic acid capsule is involved in the pathogenicity of group A Streptococci; it may be the major virulence determinant. The chain is Hyaluronan synthase (hasA) from Streptococcus pyogenes serotype M3 (strain ATCC BAA-595 / MGAS315).